A 104-amino-acid polypeptide reads, in one-letter code: Large ribosomal subunit protein uL24 (104 aa).

The protein belongs to the universal ribosomal protein uL24 family. As to quaternary structure, part of the 50S ribosomal subunit.

One of two assembly initiator proteins, it binds directly to the 5'-end of the 23S rRNA, where it nucleates assembly of the 50S subunit. Its function is as follows. One of the proteins that surrounds the polypeptide exit tunnel on the outside of the subunit. The sequence is that of Large ribosomal subunit protein uL24 from Bradyrhizobium sp. (strain BTAi1 / ATCC BAA-1182).